The chain runs to 409 residues: Short chain dehydrogenase sirS (409 aa).

NADP(+) contacts are provided by V49, L68, K195, V288, T290, and A299. The disordered stretch occupies residues 306 to 332 (GVGPEGAGEEEGKGEAEGGAKGATGWS).

It belongs to the short-chain dehydrogenases/reductases (SDR) family. Highly divergent.

It participates in mycotoxin biosynthesis. Short chain dehydrogenase; part of the gene cluster that mediates the biosynthesis of sirodesmin PL, an epipolythiodioxopiperazine (ETP) characterized by a disulfide bridged cyclic dipeptide and that acts as a phytotoxin which is involved in the blackleg didease of canola. SirD catalyzes the O-prenylation of L-tyrosine (L-Tyr) in the presence of dimethylallyl diphosphate (DMAPP) to yield 4-O-dimethylallyl-L-Tyr, and therefore represents probably the first pathway-specific enzyme in the biosynthesis of sirodesmin PL. 4-O-dimethylallyl-L-Tyr, then undergoes condensation with L-Ser in a reaction catalyzed by the non-ribosomal peptide synthase sirP to form the diketopiperazine (DKP) backbone. Further bishydroxylation of the DKP performed by the cytochrome P450 monooxygenase sirC leads to the production of the intermediate phomamide. This step is essential to form the reactive thiol group required for toxicity of sirodesmin PL. The next steps of sirodesmin biosynthesis are not well understood yet, but some predictions could be made from intermediate compounds identification. Phomamide is converted into phomalizarine via oxidation, probably by sirT. Further oxidation, methylation (by sirM or sirN) and reduction steps convert phomalizarine to deacetyl sirodesmin. Finally, acetyltransferase sirH probably acetylates deacetyl sirodesmin to produce sirodesmin PL. In Leptosphaeria maculans (Blackleg fungus), this protein is Short chain dehydrogenase sirS.